A 123-amino-acid chain; its full sequence is Large ribosomal subunit protein bL12 (123 aa).

Belongs to the bacterial ribosomal protein bL12 family. Homodimer. Part of the ribosomal stalk of the 50S ribosomal subunit. Forms a multimeric L10(L12)X complex, where L10 forms an elongated spine to which 2 to 4 L12 dimers bind in a sequential fashion. Binds GTP-bound translation factors.

Its function is as follows. Forms part of the ribosomal stalk which helps the ribosome interact with GTP-bound translation factors. Is thus essential for accurate translation. This Clostridium kluyveri (strain NBRC 12016) protein is Large ribosomal subunit protein bL12.